A 907-amino-acid polypeptide reads, in one-letter code: Valine--tRNA ligase (907 aa).

The 'HIGH' region motif lies at 45–55 (PNVTGSLHMGH). The 'KMSKS' region signature appears at 554–558 (KMSKS). Residue K557 participates in ATP binding. The stretch at 838-870 (GQLIDLEAERARLMKDVSKIEQDIEKLSAKLSN) forms a coiled coil.

Belongs to the class-I aminoacyl-tRNA synthetase family. ValS type 1 subfamily. Monomer.

The protein localises to the cytoplasm. It carries out the reaction tRNA(Val) + L-valine + ATP = L-valyl-tRNA(Val) + AMP + diphosphate. In terms of biological role, catalyzes the attachment of valine to tRNA(Val). As ValRS can inadvertently accommodate and process structurally similar amino acids such as threonine, to avoid such errors, it has a 'posttransfer' editing activity that hydrolyzes mischarged Thr-tRNA(Val) in a tRNA-dependent manner. This is Valine--tRNA ligase from Bartonella henselae (strain ATCC 49882 / DSM 28221 / CCUG 30454 / Houston 1) (Rochalimaea henselae).